A 233-amino-acid chain; its full sequence is Rano class II histocompatibility antigen, A beta chain (233 aa).

The tract at residues 1 to 80 (DFVYQFKGLC…DTVCRYNYEE (80 aa)) is beta-1. The Extracellular portion of the chain corresponds to 1 to 194 (DFVYQFKGLC…RAQSESAQSK (194 aa)). Asn-14 is a glycosylation site (N-linked (GlcNAc...) asparagine). Residues 81–184 (TEVPTSLRRL…SLESPVTVEW (104 aa)) form a beta-2 region. Positions 93–181 (PNVAISLSRT…DHASLESPVT (89 aa)) constitute an Ig-like C1-type domain. The connecting peptide stretch occupies residues 185 to 194 (RAQSESAQSK). A helical membrane pass occupies residues 195-215 (MLSGIGGLVLGVIFLGLGLFI). Over 216-233 (RHKRQKGPQGPPPAGLLQ) the chain is Cytoplasmic.

It belongs to the MHC class II family.

The protein resides in the membrane. Its function is as follows. Involved in the presentation of foreign antigens to the immune system. This Rattus norvegicus (Rat) protein is Rano class II histocompatibility antigen, A beta chain (RT1-B).